A 641-amino-acid chain; its full sequence is Probable potassium transport system protein Kup 4 (641 aa).

Helical transmembrane passes span 31 to 51 (AALGALGIVYGDLGTSPLYTL), 64 to 84 (TASALGILSLLVWTLIITISI), 119 to 139 (ILAVMGLLGAALLYGDGVITP), 155 to 175 (GSLKPFVMPAAVAILIVFFAA), 183 to 203 (IGAAFGPIMLLWFLVIAVLGL), 221 to 241 (AIGFLAHSGGNGMLVLGGVFL), 265 to 285 (WYAIVLPSLLLSYAGQTALLI), 298 to 318 (LCPTWGVYPLVFLAMIATIIA), 355 to 375 (IYVPVVNWMMMVATIGITIAF), 381 to 401 (LAGAYGTAVSTTMLLTTCLLF), 412 to 432 (LAVSILIAGLFLIVDVGFFGA), and 437 to 457 (IAEGGWLPLTFGALVFFLMLT).

This sequence belongs to the HAK/KUP transporter (TC 2.A.72) family.

The protein localises to the cell inner membrane. The catalysed reaction is K(+)(in) + H(+)(in) = K(+)(out) + H(+)(out). In terms of biological role, transport of potassium into the cell. Likely operates as a K(+):H(+) symporter. The protein is Probable potassium transport system protein Kup 4 of Bradyrhizobium sp. (strain BTAi1 / ATCC BAA-1182).